The chain runs to 712 residues: Aryl hydrocarbon receptor nuclear translocator 2 (712 aa).

Disordered stretches follow at residues 1–20 (MATP…PGSV) and 35–74 (MAGA…IERR). Arg42 bears the Omega-N-methylarginine mark. A compositionally biased stretch (basic and acidic residues) spans 63–73 (FSRENHSEIER). Positions 63–116 (FSRENHSEIERRRRNKMTQYITELSDMVPTCSALARKPDKLTILRMAVSHMKSM) constitute a bHLH domain. PAS domains are found at residues 134 to 209 (TEQE…MTGR) and 323 to 393 (PVCM…VKLK). Positions 398–441 (SVMYRFRTKNREWLLIRTSSFTFQNPYSDEIEYVICTNTNVKQL) constitute a PAC domain. The disordered stretch occupies residues 573 to 712 (AWTGSRPPFP…DLGMFPPFSE (140 aa)). Composition is skewed to low complexity over residues 597–626 (SSHP…AYPS) and 653–675 (SQWQ…QPGQ).

Efficient DNA binding requires dimerization with another bHLH protein. Heterodimer with NPAS4 or SIM1. Heterodimer with the aryl hydrocarbon receptor (AHR) or the SIM1 protein. Interacts with TACC3.

It is found in the nucleus. In terms of biological role, transcription factor that plays a role in the development of the hypothalamo-pituitary axis, postnatal brain growth, and visual and renal function. Specifically recognizes the xenobiotic response element (XRE). The protein is Aryl hydrocarbon receptor nuclear translocator 2 (Arnt2) of Rattus norvegicus (Rat).